A 242-amino-acid polypeptide reads, in one-letter code: Probable 2-phosphosulfolactate phosphatase (242 aa).

This sequence belongs to the ComB family. Mg(2+) is required as a cofactor.

It carries out the reaction (2R)-O-phospho-3-sulfolactate + H2O = (2R)-3-sulfolactate + phosphate. The chain is Probable 2-phosphosulfolactate phosphatase from Parasynechococcus marenigrum (strain WH8102).